We begin with the raw amino-acid sequence, 137 residues long: Type 3 secretion system pilotin (137 aa).

Positions 1-14 (MLLPLALLLGGCVS) are cleaved as a signal peptide.

The protein belongs to the ExsB/YscW family.

The protein resides in the cell outer membrane. Involved in the synthesis of the type III secretion system (T3SS), also called injectisome, which is used to inject bacterial effector proteins into eukaryotic host cells. Pilot protein that is required for the proper localization of the secretin PscC in the outer membrane. Necessary for full in vivo virulence. The chain is Type 3 secretion system pilotin from Pseudomonas aeruginosa (strain ATCC 15692 / DSM 22644 / CIP 104116 / JCM 14847 / LMG 12228 / 1C / PRS 101 / PAO1).